Consider the following 115-residue polypeptide: Double-headed protease inhibitor, submandibular gland (115 aa).

2 consecutive Kazal-like domains span residues 6 to 66 (IGRE…ACDI) and 67 to 115 (ECTE…HGEC). 6 disulfide bridges follow: C12–C46, C24–C43, C32–C64, C68–C97, C75–C94, and C83–C115.

The protein resides in the secreted. Functionally, this inhibitor is composed of two homologous actively inhibiting halves: one which inhibits trypsin, the other which inhibits elastase. In Vulpes vulpes (Red fox), this protein is Double-headed protease inhibitor, submandibular gland.